The chain runs to 158 residues: MNTIAPNLDGKHLRIGIVQARFTNEIGSQMLKVCCRTLQELGVADENITVATVPGALEIPIALMNFASSEKFDALIAIGVVIRGETYHFELVANESGAGIGRVALDYNIPIANAVLTTENDAQAIERIGEKASDAAKVAVECANLVNLLLEEQFEDEE.

Residues Phe22, 56–58 (ALE), and 80–82 (VVI) each bind 5-amino-6-(D-ribitylamino)uracil. Position 85–86 (85–86 (ET)) interacts with (2S)-2-hydroxy-3-oxobutyl phosphate. His88 serves as the catalytic Proton donor. Asn113 contributes to the 5-amino-6-(D-ribitylamino)uracil binding site. Arg127 provides a ligand contact to (2S)-2-hydroxy-3-oxobutyl phosphate.

Belongs to the DMRL synthase family.

It carries out the reaction (2S)-2-hydroxy-3-oxobutyl phosphate + 5-amino-6-(D-ribitylamino)uracil = 6,7-dimethyl-8-(1-D-ribityl)lumazine + phosphate + 2 H2O + H(+). The protein operates within cofactor biosynthesis; riboflavin biosynthesis; riboflavin from 2-hydroxy-3-oxobutyl phosphate and 5-amino-6-(D-ribitylamino)uracil: step 1/2. Catalyzes the formation of 6,7-dimethyl-8-ribityllumazine by condensation of 5-amino-6-(D-ribitylamino)uracil with 3,4-dihydroxy-2-butanone 4-phosphate. This is the penultimate step in the biosynthesis of riboflavin. This Neisseria gonorrhoeae (strain ATCC 700825 / FA 1090) protein is 6,7-dimethyl-8-ribityllumazine synthase.